The primary structure comprises 336 residues: Fructose-1,6-bisphosphatase class 1 (336 aa).

Mg(2+) contacts are provided by glutamate 90, aspartate 112, leucine 114, and aspartate 115. Residues 115 to 118 (DGSS), asparagine 211, and lysine 277 each bind substrate. A Mg(2+)-binding site is contributed by glutamate 283.

Belongs to the FBPase class 1 family. As to quaternary structure, homotetramer. Requires Mg(2+) as cofactor.

The protein localises to the cytoplasm. It catalyses the reaction beta-D-fructose 1,6-bisphosphate + H2O = beta-D-fructose 6-phosphate + phosphate. Its pathway is carbohydrate biosynthesis; gluconeogenesis. The chain is Fructose-1,6-bisphosphatase class 1 from Pseudomonas putida (strain GB-1).